Reading from the N-terminus, the 429-residue chain is Histidinol dehydrogenase (429 aa).

NAD(+) contacts are provided by Tyr130, Gln191, and Asn214. Substrate-binding residues include Ser237, Gln259, and His262. 2 residues coordinate Zn(2+): Gln259 and His262. Active-site proton acceptor residues include Glu327 and His328. His328, Asp361, Glu415, and His420 together coordinate substrate. Zn(2+) is bound at residue Asp361. His420 contributes to the Zn(2+) binding site.

The protein belongs to the histidinol dehydrogenase family. Zn(2+) is required as a cofactor.

It carries out the reaction L-histidinol + 2 NAD(+) + H2O = L-histidine + 2 NADH + 3 H(+). It participates in amino-acid biosynthesis; L-histidine biosynthesis; L-histidine from 5-phospho-alpha-D-ribose 1-diphosphate: step 9/9. Catalyzes the sequential NAD-dependent oxidations of L-histidinol to L-histidinaldehyde and then to L-histidine. The sequence is that of Histidinol dehydrogenase from Neisseria gonorrhoeae (strain ATCC 700825 / FA 1090).